A 298-amino-acid chain; its full sequence is MAPKVVDRRNTMPQLQAKSLEMRTPQATKTAVLVIGGAEDKVHGREILRTFFGRAGASKAYITIIPSASREPAIIGGRYIRIFEEMGAEKVEILDIREREQCESSQVRASLEACSGVFLTGGDQLRLCGVLSDTPVMEIIRQRVRGGQLTLAGTSAGAAVMGHHMIAGGGSGETPNRSLVDMATGLGLIPEVIVDQHFHNRNRMGRLISAVAAHPDRLGIGIDEDTCAVFERDGWLQVLGKGSVTIVDPTELTHTNEPHVGANEPLTVHNLRLHILSYGDRFHLYQRTVLPAVHRISS.

Residues Ser-155, Glu-173, and His-197 each act as charge relay system in the active site.

This sequence belongs to the peptidase S51 family.

It carries out the reaction [L-4-(L-arginin-2-N-yl)aspartate](n) + H2O = [L-4-(L-arginin-2-N-yl)aspartate](n-1) + L-4-(L-arginin-2-N-yl)aspartate. Its function is as follows. Exopeptidase that catalyzes the hydrolytic cleavage of multi-L-arginyl-poly-L-aspartic acid (cyanophycin; a water-insoluble reserve polymer) into aspartate-arginine dipeptides. This is Cyanophycinase (cphB) from Trichormus variabilis (strain ATCC 29413 / PCC 7937) (Anabaena variabilis).